Reading from the N-terminus, the 278-residue chain is Putative phosphoenolpyruvate synthase regulatory protein (278 aa).

158–165 (GVSRSGKT) contacts ADP.

It belongs to the pyruvate, phosphate/water dikinase regulatory protein family. PSRP subfamily.

It carries out the reaction [pyruvate, water dikinase] + ADP = [pyruvate, water dikinase]-phosphate + AMP + H(+). The enzyme catalyses [pyruvate, water dikinase]-phosphate + phosphate + H(+) = [pyruvate, water dikinase] + diphosphate. Functionally, bifunctional serine/threonine kinase and phosphorylase involved in the regulation of the phosphoenolpyruvate synthase (PEPS) by catalyzing its phosphorylation/dephosphorylation. The chain is Putative phosphoenolpyruvate synthase regulatory protein from Acinetobacter baylyi (strain ATCC 33305 / BD413 / ADP1).